We begin with the raw amino-acid sequence, 116 residues long: MINLIITLITNSLLSTIIIIIAFWLPQLYLYLEKSSPYECGFDPLGSARLPFSMKFFLVAITFLLFDLEIALLLPLPWAIQLPSPFTTLILSYCLIMLLTVGLAYEWIQKGLEWTE.

The next 3 helical transmembrane spans lie at 4–24, 56–76, and 88–108; these read LIIT…IAFW, FFLV…LLPL, and TLIL…YEWI.

The protein belongs to the complex I subunit 3 family. In terms of assembly, core subunit of respiratory chain NADH dehydrogenase (Complex I) which is composed of 45 different subunits. Interacts with TMEM186. Interacts with TMEM242.

The protein localises to the mitochondrion inner membrane. It carries out the reaction a ubiquinone + NADH + 5 H(+)(in) = a ubiquinol + NAD(+) + 4 H(+)(out). Its function is as follows. Core subunit of the mitochondrial membrane respiratory chain NADH dehydrogenase (Complex I) which catalyzes electron transfer from NADH through the respiratory chain, using ubiquinone as an electron acceptor. Essential for the catalytic activity of complex I. This chain is NADH-ubiquinone oxidoreductase chain 3, found in Didelphis virginiana (North American opossum).